We begin with the raw amino-acid sequence, 675 residues long: Protein PALS1 (675 aa).

Residues 1 to 78 are disordered; that stretch reads MTTSHMNGHV…RREEEGKKQE (78 aa). Residues 1–345 are required for the correct localization of PALS1 and PATJ at cell-cell contacts and the normal formation of tight junctions and adherens junctions; that stretch reads MTTSHMNGHV…QQIKPPPAKE (345 aa). Basic and acidic residues-rich tracts occupy residues 10-36 and 54-78; these read VTEE…REMA and AQLE…KKQE. 2 positions are modified to phosphoserine: Ser14 and Ser25. Residues 21–140 are interaction with PARD6B; that stretch reads VDLASPEEHQ…LKHIQHTLVD (120 aa). 2 positions are modified to phosphoserine: Ser83 and Ser84. 2 L27 domains span residues 120 to 177 and 179 to 235; these read KILE…NKAS and PFPL…MQLE. Residues 181 to 243 are interaction with LIN7C; the sequence is PLISNAQDLA…LEPFTDERVY (63 aa). One can recognise a PDZ domain in the interval 256–336; sequence IVRIEKARDI…TLTFVLIPSQ (81 aa). The SH3 domain occupies 345–417; that stretch reads ETVIHVKAHF…PGKSFQQQRE (73 aa). In terms of domain architecture, Guanylate kinase-like spans 479–660; sequence KRPIILIGPQ…AYQELLRLIN (182 aa). 486–493 lines the ATP pocket; the sequence is GPQNCGQN.

It belongs to the MAGUK family. In terms of assembly, heterodimer with MPP1. Forms a heterotrimeric complex composed of PALS1, LIN7B and PATJ; the N-terminal L27 domain of PALS1 interacts with the L27 domain of PATJ and the C-terminal L27 domain of PALS1 interacts with the L27 domain of LIN7B. Component of a complex composed of PALS1, CRB1 and MPP4. Component of a complex whose core is composed of ARHGAP17, AMOT, PALS1, PATJ and PARD3/PAR3. Component of a complex composed of PALS1, CRB1 and EPB41L5. Within the complex, interacts (via HOOK domain) with EPB41L5 (via FERM domain), and interacts with CRB1 (via intracellular domain). Component of a complex composed of PALS1, MPP3 and CRB1; PALS1 acts as a bridging protein between MPP3 (via guanylate kinase-like domain) and CRB1. Component of a complex composed of CRB3, PALS1 and PATJ. As part of the Crumbs complex; interacts with WWP1, the interaction is enhanced by AMOTL2 and facilitates WWP1 localization to the plasma membrane. The Crumbs complex promotes monoubiquitination of AMOTL2 by WWP1, which activates the Hippo signaling pathway. Interacts (via PDZ domain) with PATJ (via N-terminus). Interacts with EZR. Interacts (via PDZ domain) with CRB1 (via C-terminal ERLI motif). While the PDZ domain is sufficient for interaction with CRB1, the adjacent SH3 and guanylate kinase-like domains are likely to contribute to a high affinity interaction. Interacts with WWTR1/TAZ (via WW domain). Interacts with MPP7. Interacts (via PDZ domain) with CRB3 (via C-terminus). Interacts with LIN7C. Interacts with MPDZ. Interacts with PARD6B. Interacts with SC6A1. Interacts with CDH5; the interaction promotes PALS1 localization to cell junctions and is required for CDH5-mediated vascular lumen formation and endothelial cell. Interacts with NPHP1 (via coiled coil and SH3 domains). Interacts with NPHP4. Interacts with CRB2.

It localises to the golgi apparatus. Its subcellular location is the cell membrane. It is found in the endomembrane system. The protein localises to the cell junction. The protein resides in the tight junction. It localises to the adherens junction. Its subcellular location is the cell projection. It is found in the axon. The protein localises to the perikaryon. The protein resides in the apical cell membrane. Plays a role in tight junction biogenesis and in the establishment of cell polarity in epithelial cells. Also involved in adherens junction biogenesis by ensuring correct localization of the exocyst complex protein EXOC4/SEC8 which allows trafficking of adherens junction structural component CDH1 to the cell surface. Plays a role through its interaction with CDH5 in vascular lumen formation and endothelial membrane polarity. Required during embryonic and postnatal retinal development. Required for the maintenance of cerebellar progenitor cells in an undifferentiated proliferative state, preventing premature differentiation, and is required for cerebellar histogenesis, fissure formation, cerebellar layer organization and cortical development. Plays a role in neuronal progenitor cell survival, potentially via promotion of mTOR signaling. Plays a role in the radial and longitudinal extension of the myelin sheath in Schwann cells. May modulate SC6A1/GAT1-mediated GABA uptake by stabilizing the transporter. May play a role in the T-cell receptor-mediated activation of NF-kappa-B. Required for localization of EZR to the apical membrane of parietal cells and may play a role in the dynamic remodeling of the apical cytoskeleton. Required for the normal polarized localization of the vesicular marker STX4. Required for the correct trafficking of the myelin proteins PMP22 and MAG. Involved in promoting phosphorylation and cytoplasmic retention of transcriptional coactivators YAP1 and WWTR1/TAZ which leads to suppression of TGFB1-dependent transcription of target genes such as CCN2/CTGF, SERPINE1/PAI1, SNAI1/SNAIL1 and SMAD7. This is Protein PALS1 from Canis lupus familiaris (Dog).